The chain runs to 1227 residues: Codanin-1 (1227 aa).

A2 is modified (N-acetylalanine). Residues 63-294 are disordered; that stretch reads RVLPQGPPTP…SLTDEPADPA (232 aa). The residue at position 71 (T71) is a Phosphothreonine. Residues 128-137 show a composition bias toward basic and acidic residues; sequence ARERGGRGLE. Over residues 155-167 the composition is skewed to low complexity; sequence GSGSPSRPSLTLS. The interaction with ASF1A/B stretch occupies residues 188 to 208; the sequence is PTGTKPSRRINPTPVSEERSL. The segment covering 214-232 has biased composition (polar residues); it reads CFTSPPISCVPSSQPSALD. Over residues 247–260 the composition is skewed to basic and acidic residues; the sequence is LQEEREMLRKERSK. Residues S265 and S285 each carry the phosphoserine modification. 2 helical membrane-spanning segments follow: residues 312-332 and 626-646; these read CIAE…FQLL and FAVV…VAFL.

In terms of assembly, found in a cytosolic complex with ASF1A, ASF1B, IPO4 and histones H3.1 and H4. As to expression, ubiquitously expressed. Isoform 3 is not found in erythroid cells.

The protein localises to the cytoplasm. The protein resides in the nucleus. It localises to the membrane. In terms of biological role, may act as a negative regulator of ASF1 in chromatin assembly. This chain is Codanin-1 (CDAN1), found in Homo sapiens (Human).